The following is a 368-amino-acid chain: S-adenosylmethionine decarboxylase proenzyme 1 (368 aa).

Residues Glu9 and Arg12 contribute to the active site. The active-site Schiff-base intermediate with substrate; via pyruvic acid is Ser69. Ser69 is subject to Pyruvic acid (Ser); by autocatalysis. The active-site Proton donor; for catalytic activity is the Cys83. Residues Ser234 and His247 each act as proton acceptor; for processing activity in the active site.

The protein belongs to the eukaryotic AdoMetDC family. Pyruvate serves as cofactor. Is synthesized initially as an inactive proenzyme. Formation of the active enzyme involves a self-maturation process in which the active site pyruvoyl group is generated from an internal serine residue via an autocatalytic post-translational modification. Two non-identical subunits are generated from the proenzyme in this reaction, and the pyruvate is formed at the N-terminus of the alpha chain, which is derived from the carboxyl end of the proenzyme. The post-translation cleavage follows an unusual pathway, termed non-hydrolytic serinolysis, in which the side chain hydroxyl group of the serine supplies its oxygen atom to form the C-terminus of the beta chain, while the remainder of the serine residue undergoes an oxidative deamination to produce ammonia and the pyruvoyl group blocking the N-terminus of the alpha chain.

It catalyses the reaction S-adenosyl-L-methionine + H(+) = S-adenosyl 3-(methylsulfanyl)propylamine + CO2. It participates in amine and polyamine biosynthesis; S-adenosylmethioninamine biosynthesis; S-adenosylmethioninamine from S-adenosyl-L-methionine: step 1/1. The protein is S-adenosylmethionine decarboxylase proenzyme 1 (SAMDC1) of Brassica juncea (Indian mustard).